A 566-amino-acid chain; its full sequence is Proline--tRNA ligase (566 aa).

It belongs to the class-II aminoacyl-tRNA synthetase family. ProS type 1 subfamily. In terms of assembly, homodimer.

Its subcellular location is the cytoplasm. It carries out the reaction tRNA(Pro) + L-proline + ATP = L-prolyl-tRNA(Pro) + AMP + diphosphate. Catalyzes the attachment of proline to tRNA(Pro) in a two-step reaction: proline is first activated by ATP to form Pro-AMP and then transferred to the acceptor end of tRNA(Pro). As ProRS can inadvertently accommodate and process non-cognate amino acids such as alanine and cysteine, to avoid such errors it has two additional distinct editing activities against alanine. One activity is designated as 'pretransfer' editing and involves the tRNA(Pro)-independent hydrolysis of activated Ala-AMP. The other activity is designated 'posttransfer' editing and involves deacylation of mischarged Ala-tRNA(Pro). The misacylated Cys-tRNA(Pro) is not edited by ProRS. The chain is Proline--tRNA ligase from Coxiella burnetii (strain RSA 493 / Nine Mile phase I).